Consider the following 499-residue polypeptide: MVRSGKNGDLHLKQIAYYKRTGEYHPTTLPSERSGIRRAAKKFVFKEKKKVLRECHENDTGAHHGISRTLTLVESSYYWTSVTNDVKQWVYACQHCQVAKNTVILAPKQHLLKVENPWSIVTVDLMGPFHTSNRSHVYAIIMTDLFTKWVVILPLCDVSASEISKAIINIFFLYGPPQKIIMDQRDEFIHQINVELCELFGTKQIVISHASQTINPAESTPSTIKTFLSKHCVDYPNDWDDHLPAVSFAFNVTHLEPTKNTPYFQMFNRNPYMPESSDIREVDGDNTSMFAKILDAIKEADKIMENKTTSVGQMENNNCHELNKSKIIVKKKPKQQNPFHLKVGHEVLRQRKNWWKDGRFRSEWVGPCVIDYITENGGAVLRDSSGARLKRPIKMSHLKPYVRESGEQDSLHLLHGSVVADHDYVGMPELPVGAYQASILVEDAAIGVDDSELLTSSKDRELLEYRNAKISPLMEDHNALEKQTFSLLDSSNQVLEYLT.

Residues 113-270 (KVENPWSIVT…TPYFQMFNRN (158 aa)) enclose the Integrase catalytic domain.

The protein is Gypsy retrotransposon integrase-like protein 1 (GIN1) of Bos taurus (Bovine).